Here is a 251-residue protein sequence, read N- to C-terminus: Triosephosphate isomerase (251 aa).

9 to 11 (NWK) is a substrate binding site. Histidine 95 functions as the Electrophile in the catalytic mechanism. Glutamate 167 (proton acceptor) is an active-site residue. Substrate contacts are provided by residues glycine 173, serine 212, and 233 to 234 (GG).

Belongs to the triosephosphate isomerase family. As to quaternary structure, homodimer.

The protein localises to the cytoplasm. The catalysed reaction is D-glyceraldehyde 3-phosphate = dihydroxyacetone phosphate. Its pathway is carbohydrate biosynthesis; gluconeogenesis. The protein operates within carbohydrate degradation; glycolysis; D-glyceraldehyde 3-phosphate from glycerone phosphate: step 1/1. Involved in the gluconeogenesis. Catalyzes stereospecifically the conversion of dihydroxyacetone phosphate (DHAP) to D-glyceraldehyde-3-phosphate (G3P). The sequence is that of Triosephosphate isomerase from Pseudomonas fluorescens (strain ATCC BAA-477 / NRRL B-23932 / Pf-5).